We begin with the raw amino-acid sequence, 457 residues long: Embryogenesis-associated protein EMB8 (457 aa).

A disordered region spans residues 39 to 59 (KKPAAGACEEQDELTSGSAAR). The AB hydrolase-1 domain occupies 151-391 (PVLILLPGLT…LVVTPNGGHL (241 aa)). Active-site charge relay system residues include Ser231, Asp361, and His390. The span at 438–447 (VDSVHTRETN) shows a compositional bias: basic and acidic residues. Residues 438–457 (VDSVHTRETNNYKSPIENVN) form a disordered region. Residues 448–457 (NYKSPIENVN) are compositionally biased toward polar residues.

The protein belongs to the AB hydrolase superfamily. AB hydrolase 4 family.

The protein is Embryogenesis-associated protein EMB8 (EMB8) of Picea glauca (White spruce).